The sequence spans 351 residues: Cytoplasmic dynein 2 light intermediate chain 1 (351 aa).

The segment at 304 to 351 (TLKDVKDPAKDPQYAESEVDEMRIQKDQELEQYKRSSSKSWKQIELDS) is disordered. The segment covering 323–337 (DEMRIQKDQELEQYK) has biased composition (basic and acidic residues).

It belongs to the dynein light intermediate chain family. In terms of assembly, light intermediate chain of the cytoplasmic dynein complex 2, a multisubunit complex composed at least of eleven different proteins. The cytoplasmic dynein 2 complex consists of two catalytic heavy chains (HCs) and a number of non-catalytic subunits presented by intermediate chains (ICs), light intermediate chains (LICs) and light chains (LCs). Among them, a heavy chain (DYNC2H1), two intermediate chains (DYNC2I2 and DYNC2I1), a light intermediate chain (DYNC2LI1), and a light chain (DYNLT2B) are unique to the dynein-2 complex, but a subset of light chains are also shared by dynein-1 and dynein-2 complexes. Dynein-2 complex is built around two copies of cytoplasmic dynein 2 heavy chain 1 (DYNC2H1). The C-terminal region forms the motor domain, which converts the energy from ATP hydrolysis into movement. Its N-terminal region forms the tail, an extended structure that binds the other subunits and holds the two heavy chains in a homodimer. Interacts with DYNC2H1 (via N-terminus); this interaction stabilizes the dynein-2 complex structure.

The protein resides in the cytoplasm. It is found in the cell projection. The protein localises to the cilium. It localises to the cytoskeleton. Its subcellular location is the cilium basal body. The protein resides in the cilium axoneme. It is found in the microtubule organizing center. The protein localises to the centrosome. Acts as one of several non-catalytic accessory components of the cytoplasmic dynein 2 complex (dynein-2 complex), a motor protein complex that drives the movement of cargos along microtubules within cilia and flagella in concert with the intraflagellar transport (IFT) system, facilitating the assembly of these organelles. Involved in the regulation of ciliary length. The polypeptide is Cytoplasmic dynein 2 light intermediate chain 1 (DYNC2LI1) (Bos taurus (Bovine)).